The sequence spans 1424 residues: S-layer protein A (1424 aa).

The N-terminal stretch at 1–24 (MNKLVGLLVSSLFLASILIGIAPA) is a signal peptide. Residues Asn60, Asn70, Asn276, Asn295, Asn342, Asn358, Asn377, Asn468, Asn517, Asn545, Asn559, Asn581, Asn633, Asn714, Asn875, Asn914, Asn955, Asn989, Asn1018, Asn1042, Asn1093, Asn1134, Asn1197, Asn1217, Asn1252, Asn1276, Asn1304, and Asn1419 are each glycosylated (N-linked (GlcNAc...) asparagine).

This sequence belongs to the Sulfolobales SlaA family. In terms of assembly, the mushroom-shaped unit cells of the Sulfolobales' S-layers may consist of three SlaB subunits and six SlaA subunits. In terms of processing, glycosylated. C-terminal glycosylation sites are modified with a heterogeneous family of glycans, with the largest having a composition Glc(1)Man(2)GlcNAc(2) plus 6-sulfoquinovose (QuiS).

It is found in the secreted. Its subcellular location is the cell wall. It localises to the S-layer. S-layer large protein. May form the highly ordered outer sheath. The polypeptide is S-layer protein A (Sulfolobus acidocaldarius (strain ATCC 33909 / DSM 639 / JCM 8929 / NBRC 15157 / NCIMB 11770)).